A 234-amino-acid polypeptide reads, in one-letter code: MEKFFSPSRHNYADLSPTDVPASEESDEALEEKQFEYFQQRQHRRLVLVNRLLAASTVALVMVSLWLGWELHTAKFGSMGSFPYGFKYELEAAKKVIKLEEYKFLGSPIFLDDGTELVPEPTPGPMKTLGVTDMYVGEPSKELDWNWNQLHWDHCLNHLRQMILCQGDLTPIPSKYYRGITDNYIFGDMPHTCRNWDSVREFITDRFNGSSAVPLAPGTVLSDPYKKLLGILDE.

The disordered stretch occupies residues 1–26 (MEKFFSPSRHNYADLSPTDVPASEES). Residues 47-69 (VLVNRLLAASTVALVMVSLWLGW) form a helical membrane-spanning segment. The HXXHC 1 signature appears at 151-155 (HWDHC). Asn-208 carries an N-linked (GlcNAc...) asparagine glycan.

This sequence belongs to the ustYa family.

It localises to the membrane. The protein operates within mycotoxin biosynthesis. UstYa family oxidase; part of the gene cluster that mediates the biosynthesis of the phomopsins, a group of hexapeptide mycotoxins which infects lupins and causes lupinosis disease in livestock. Within the pathway, phomYd' catalyzes the desaturation of the Asp moiety into 2,3-dehydroaspartic acid (dAsp). The pathway starts with the processing of the precursor phomA' by several endopeptidases including kexin proteases as well as the cluster-specific S41 family peptidase phomP1 and the oligopeptidase phomG' to produce 10 identical copies of the hexapeptide Tyr-Val-Ile-Pro-Ile-Asp. After being excised from the precursor peptide, the core peptides are cyclized and modified post-translationally by enzymes encoded within the gene cluster. The timing and order of proteolysis of the phomA' precursor and PTMs are still unknown. Two tyrosinase-like enzymes, phomQ1' and phomQ2, catalyze the chlorination and hydroxylation of Tyr, respectively. PhomYb, is proposed to be involved in the construction of the macrocyclic structure. The other 4 ustYa family proteins may be involved in PTMs that generate the unique structure of phomopsin A. PhomYa' is required for the hydroxylation of C-beta of Tyr. PhomYc', phomYd', and phomYe are responsible for the biosynthesis of 2,3-dehydroisoleucine (dIle), 2,3-dehydroaspartic acid (dAsp), and 3,4-dehydroproline (dPro), respectively. While dIle formation by phomYc' is indispensable for the installation of dAsp by phomYd', the order of the other PTMs have not been elucidated yet. Most of the biosynthetic enzymes likely have broad substrate specificity, and thus, there might be a metabolic grid from a precursor to phomopsin A. The enzyme(s) responsible for the biosynthesis of 3,4-dehydrovaline (dVal) have also not been identified yet. Finally, phomM' acts as an S-adenosylmethionine-dependent alpha-N-methyltransferase that catalyzes two successive N-methylation reactions, converting N-desmethyl-phomopsin A to phomopsin A and phomopsin A further to an N,N-dimethylated congener called phomopsin E. In Diaporthe leptostromiformis (Lupinosis disease fungus), this protein is UstYa family oxidase phomYd'.